Consider the following 435-residue polypeptide: Xylose isomerase (435 aa).

Active-site residues include His-100 and Asp-103. The Mg(2+) site is built by Glu-231, Glu-267, His-270, Asp-295, Asp-306, Asp-308, and Asp-338.

The protein belongs to the xylose isomerase family. Homotetramer. Mg(2+) serves as cofactor.

The protein localises to the cytoplasm. The catalysed reaction is alpha-D-xylose = alpha-D-xylulofuranose. The polypeptide is Xylose isomerase (Brucella canis (strain ATCC 23365 / NCTC 10854 / RM-666)).